Consider the following 168-residue polypeptide: Protein-export protein SecB (168 aa).

The protein belongs to the SecB family. Homotetramer, a dimer of dimers. One homotetramer interacts with 1 SecA dimer.

It localises to the cytoplasm. In terms of biological role, one of the proteins required for the normal export of preproteins out of the cell cytoplasm. It is a molecular chaperone that binds to a subset of precursor proteins, maintaining them in a translocation-competent state. It also specifically binds to its receptor SecA. The polypeptide is Protein-export protein SecB (Rhizobium meliloti (strain 1021) (Ensifer meliloti)).